A 99-amino-acid polypeptide reads, in one-letter code: UPF0122 protein UUR10_0158 (99 aa).

Belongs to the UPF0122 family.

Might take part in the signal recognition particle (SRP) pathway. This is inferred from the conservation of its genetic proximity to ftsY/ffh. May be a regulatory protein. The chain is UPF0122 protein UUR10_0158 from Ureaplasma urealyticum serovar 10 (strain ATCC 33699 / Western).